The primary structure comprises 205 residues: ATP-dependent Clp protease proteolytic subunit (205 aa).

Residue Ser109 is the Nucleophile of the active site. The active site involves His134.

It belongs to the peptidase S14 family. As to quaternary structure, fourteen ClpP subunits assemble into 2 heptameric rings which stack back to back to give a disk-like structure with a central cavity, resembling the structure of eukaryotic proteasomes.

The protein resides in the cytoplasm. The enzyme catalyses Hydrolysis of proteins to small peptides in the presence of ATP and magnesium. alpha-casein is the usual test substrate. In the absence of ATP, only oligopeptides shorter than five residues are hydrolyzed (such as succinyl-Leu-Tyr-|-NHMec, and Leu-Tyr-Leu-|-Tyr-Trp, in which cleavage of the -Tyr-|-Leu- and -Tyr-|-Trp bonds also occurs).. Cleaves peptides in various proteins in a process that requires ATP hydrolysis. Has a chymotrypsin-like activity. Plays a major role in the degradation of misfolded proteins. In Baumannia cicadellinicola subsp. Homalodisca coagulata, this protein is ATP-dependent Clp protease proteolytic subunit.